The primary structure comprises 148 residues: Protein Smg homolog (148 aa).

This sequence belongs to the Smg family.

The sequence is that of Protein Smg homolog from Thiobacillus denitrificans (strain ATCC 25259 / T1).